The sequence spans 150 residues: Deoxyuridine 5'-triphosphate nucleotidohydrolase (150 aa).

Residues 69 to 71 (RSG), Asn82, 86 to 88 (LID), and Met96 each bind substrate.

It belongs to the dUTPase family. Requires Mg(2+) as cofactor.

The catalysed reaction is dUTP + H2O = dUMP + diphosphate + H(+). It functions in the pathway pyrimidine metabolism; dUMP biosynthesis; dUMP from dCTP (dUTP route): step 2/2. This enzyme is involved in nucleotide metabolism: it produces dUMP, the immediate precursor of thymidine nucleotides and it decreases the intracellular concentration of dUTP so that uracil cannot be incorporated into DNA. In Alcanivorax borkumensis (strain ATCC 700651 / DSM 11573 / NCIMB 13689 / SK2), this protein is Deoxyuridine 5'-triphosphate nucleotidohydrolase.